A 120-amino-acid polypeptide reads, in one-letter code: NAD(P)H-quinone oxidoreductase subunit 3, chloroplastic (120 aa).

3 consecutive transmembrane segments (helical) span residues L14 to I34, M64 to M84, and I88 to L108.

It belongs to the complex I subunit 3 family. NDH is composed of at least 16 different subunits, 5 of which are encoded in the nucleus.

It is found in the plastid. It localises to the chloroplast thylakoid membrane. The catalysed reaction is a plastoquinone + NADH + (n+1) H(+)(in) = a plastoquinol + NAD(+) + n H(+)(out). The enzyme catalyses a plastoquinone + NADPH + (n+1) H(+)(in) = a plastoquinol + NADP(+) + n H(+)(out). Functionally, NDH shuttles electrons from NAD(P)H:plastoquinone, via FMN and iron-sulfur (Fe-S) centers, to quinones in the photosynthetic chain and possibly in a chloroplast respiratory chain. The immediate electron acceptor for the enzyme in this species is believed to be plastoquinone. Couples the redox reaction to proton translocation, and thus conserves the redox energy in a proton gradient. This chain is NAD(P)H-quinone oxidoreductase subunit 3, chloroplastic, found in Coffea arabica (Arabian coffee).